The chain runs to 315 residues: Ribose-phosphate pyrophosphokinase (315 aa).

ATP contacts are provided by residues 37–39 (DGE) and 96–97 (RQ). His-131 and Asp-170 together coordinate Mg(2+). Lys-194 is an active-site residue. Residues Arg-196, Asp-220, and 224-228 (DTGGT) contribute to the D-ribose 5-phosphate site.

The protein belongs to the ribose-phosphate pyrophosphokinase family. Class I subfamily. Homohexamer. The cofactor is Mg(2+).

The protein resides in the cytoplasm. It catalyses the reaction D-ribose 5-phosphate + ATP = 5-phospho-alpha-D-ribose 1-diphosphate + AMP + H(+). The protein operates within metabolic intermediate biosynthesis; 5-phospho-alpha-D-ribose 1-diphosphate biosynthesis; 5-phospho-alpha-D-ribose 1-diphosphate from D-ribose 5-phosphate (route I): step 1/1. Involved in the biosynthesis of the central metabolite phospho-alpha-D-ribosyl-1-pyrophosphate (PRPP) via the transfer of pyrophosphoryl group from ATP to 1-hydroxyl of ribose-5-phosphate (Rib-5-P). This Photorhabdus laumondii subsp. laumondii (strain DSM 15139 / CIP 105565 / TT01) (Photorhabdus luminescens subsp. laumondii) protein is Ribose-phosphate pyrophosphokinase.